An 801-amino-acid chain; its full sequence is Elongation factor G, mitochondrial (801 aa).

A mitochondrion-targeting transit peptide spans 1–62 (MRTPTLARLP…LSKHFQQRRN (62 aa)). The tr-type G domain maps to 99 to 386 (SRVRNIGIAA…GVIDYLPNPS (288 aa)). GTP is bound by residues 108-115 (AHIDSGKT), 184-188 (DTPGH), and 238-241 (NKMD).

The protein belongs to the TRAFAC class translation factor GTPase superfamily. Classic translation factor GTPase family. EF-G/EF-2 subfamily.

It localises to the mitochondrion. It functions in the pathway protein biosynthesis; polypeptide chain elongation. Its function is as follows. Mitochondrial GTPase that catalyzes the GTP-dependent ribosomal translocation step during translation elongation. During this step, the ribosome changes from the pre-translocational (PRE) to the post-translocational (POST) state as the newly formed A-site-bound peptidyl-tRNA and P-site-bound deacylated tRNA move to the P and E sites, respectively. Catalyzes the coordinated movement of the two tRNA molecules, the mRNA and conformational changes in the ribosome. This chain is Elongation factor G, mitochondrial (mef1), found in Aspergillus niger (strain ATCC MYA-4892 / CBS 513.88 / FGSC A1513).